A 155-amino-acid chain; its full sequence is Small ribosomal subunit protein uS7cz/uS7cy (155 aa).

Belongs to the universal ribosomal protein uS7 family. In terms of assembly, part of the 30S ribosomal subunit.

Its subcellular location is the plastid. It localises to the chloroplast. Functionally, one of the primary rRNA binding proteins, it binds directly to 16S rRNA where it nucleates assembly of the head domain of the 30S subunit. The chain is Small ribosomal subunit protein uS7cz/uS7cy (rps7-A) from Pelargonium hortorum (Common geranium).